The following is a 213-amino-acid chain: UPF0056 membrane protein AF_2111 (213 aa).

The next 6 membrane-spanning stretches (helical) occupy residues 1–21 (MDIA…FIII), 51–71 (IIAF…LDYF), 75–95 (ISSL…DILL), 118–138 (VFPL…GIVL), 142–162 (AGDV…YSIV), and 181–201 (ADIA…EFVF).

Belongs to the UPF0056 (MarC) family.

The protein resides in the cell membrane. This Archaeoglobus fulgidus (strain ATCC 49558 / DSM 4304 / JCM 9628 / NBRC 100126 / VC-16) protein is UPF0056 membrane protein AF_2111.